The following is a 1299-amino-acid chain: MNISIIQNNNPLSMMSSVYRQNQSQDTNLPSALTIYNSLTGAKVVASAYQFHNLEALKQFIGMSFNVATENLFLLTPFGIKLKFSMIVHEEISEIYVFDRRYFNVNNIEASGNMDNVNDLLAELNQTDFINMIKPLASPLLSEELSVFVEKLTLVLENTTQIKAVDINLNMLRMLLNSLKRNSGWASALLSDFKKTVAFDECTPEDNDLETILTSLNVLIQYVGLVFKTLEKKFNDSIDALVLLQSNSLVDQWRDQYALLKRIPFEFKSGSSNVPEKLFLSQLVNESHLDKCAEESRRLNKSMNERLVMLRSKIEADVIKPRQELLQEYNGYMSQYIRPETDATQKTQKIQDCKRILAELEVHVSKLIQSSSSLPSFEELITTASQTSTTLSASSIANIKKLTQLYKYQESELVPYIFQLANNLYDIQINKLNARKELQTKLICSTLINITKIQLNIMRLSTVLNTEVAKNIASIKENELQLSVVSDLPLMFGIFVIANLNNLKFGISLNNIVKKANEIFEMLRFMESRNRAKWLKEFLASSGADKVEFLHLDEEARERFINENMLSYKLEQVDAIRSKKSPSPVDHPASPVSGQEKHYLTSINRLLHNINGFPAPRPTATELPKQRETNIMTNLARNISVKSIVSYINTLRKEGIDLNIVNRLEECLKDFGITYGAIERKAIETEDGEEIVVKGKNAGDLGTFDVNDVNYMRLFKKFIKSFESEGIVININVNQQDSVSNDELIKGYERRIRKLENVLHTRNFQQFNEQWSRHRPVHTLPNPVSRRQSDMSQEPAVHENTILFNENVVLGRKTIDLPPSHYGERIERLEKENERYRGEIEELKKGTDLAELDRLKKEIEDLQKADMEKDKRLAALEEENKNLKESNEELTNSNKELVNMCEELKSMKSDLLENMTQKESEFGKEAKVNQQEINELKLRIEELEEDESNLVNVNKTLNERLAIKDGLLCQLYELVQGAYGKLNQMSGEIFSNLTRVCLLLESIGLLLIRETPSFDNHPGTLTIKRVKGLRSRKRQIKQASDSTHNGNLQNDTFEDSEHIDNALMEVVSSEVVPEAEQYLHWVDTNVLNYTISSDLGIEDEIEHKKNESSLIDMSLCEESSIEKKVKKLLANYESFNVEQGFQNFLRFNHVDNELVIERVFRRFSDVETLARKLQKDKTQQKQELKMLTAELDGKIAFRNFKVGDLVLFLKTLTPANEELGGGDEQPWAAFNVGCPNYYLKNTKGEGYIELSDRDWLVGRVSKIEPRQVTEQNFHSKTENPFRLAKSVVWYYVEAREVKE.

3 coiled-coil regions span residues 294–367 (EESR…VSKL), 820–962 (SHYG…ERLA), and 1164–1194 (SDVETLARKLQKDKTQQKQELKMLTAELDGK).

This sequence belongs to the ATG11 family. As to quaternary structure, homodimer.

Its subcellular location is the preautophagosomal structure membrane. The protein localises to the vacuole membrane. In terms of biological role, involved in cytoplasm to vacuole transport (Cvt), pexophagy, mitophagy and nucleophagy. Recruits mitochondria for their selective degradation via autophagy (mitophagy) during starvation. Works as scaffold proteins that recruit ATG proteins to the pre-autophagosome (PAS), the site of vesicle/autophagosome formation. Required for the Cvt vesicles completion. The protein is Autophagy-related protein 11 (ATG11) of Pichia angusta (Yeast).